Consider the following 257-residue polypeptide: Expansin-A10 (257 aa).

The signal sequence occupies residues 1 to 18 (MAPCLLLVLFLLPALATG). The Expansin-like EG45 domain maps to 50-163 (GGACGFGDLG…RRVNCLRDGG (114 aa)). Positions 173–252 (FFLTVLISNV…EWDFGKTYTG (80 aa)) constitute an Expansin-like CBD domain.

It belongs to the expansin family. Expansin A subfamily. As to expression, expressed in panicles and flowers.

The protein localises to the secreted. The protein resides in the cell wall. It is found in the membrane. Functionally, may cause loosening and extension of plant cell walls by disrupting non-covalent bonding between cellulose microfibrils and matrix glucans. No enzymatic activity has been found. May be required for rapid internodal elongation in deepwater rice during submergence. The chain is Expansin-A10 (EXPA10) from Oryza sativa subsp. japonica (Rice).